The chain runs to 543 residues: Bifunctional riboflavin biosynthesis protein RIBA 1, chloroplastic (543 aa).

The transit peptide at 1-56 (MSSINLSSSSPSTISLSRSRLSQSSTTLLHGLHRVTLPSNHPLSTFSIKTNTGKVK) directs the protein to the chloroplast. Residues 57-328 (AAVISREDDL…IADLIRYRRK (272 aa)) are DHBP synthase. D-ribulose 5-phosphate-binding positions include 152 to 153 (RE), D157, 267 to 271 (RAGHT), and E291. Residue E153 coordinates Mg(2+). H270 contributes to the Mg(2+) binding site. Residues 329–543 (RDKLVERASA…VEKIESESES (215 aa)) form a GTP cyclohydrolase II region. 379–383 (RVHSE) provides a ligand contact to GTP. Zn(2+) contacts are provided by C384, C395, and C397. Residues Q400, 423-425 (EGR), and T445 each bind GTP. The Proton acceptor; for GTP cyclohydrolase activity role is filled by D457. The active-site Nucleophile; for GTP cyclohydrolase activity is R459. Residues T480 and K485 each contribute to the GTP site.

The protein in the N-terminal section; belongs to the DHBP synthase family. This sequence in the C-terminal section; belongs to the GTP cyclohydrolase II family. It depends on Mg(2+) as a cofactor. Mn(2+) serves as cofactor. Zn(2+) is required as a cofactor. Expressed in leaves, shoots, roots, flowers and siliques.

The protein localises to the plastid. It is found in the chloroplast. It carries out the reaction D-ribulose 5-phosphate = (2S)-2-hydroxy-3-oxobutyl phosphate + formate + H(+). It catalyses the reaction GTP + 4 H2O = 2,5-diamino-6-hydroxy-4-(5-phosphoribosylamino)-pyrimidine + formate + 2 phosphate + 3 H(+). It participates in cofactor biosynthesis; riboflavin biosynthesis; 2-hydroxy-3-oxobutyl phosphate from D-ribulose 5-phosphate: step 1/1. The protein operates within cofactor biosynthesis; riboflavin biosynthesis; 5-amino-6-(D-ribitylamino)uracil from GTP: step 1/4. Involved in riboflavin biosynthesis. Catalyzes both the conversion of D-ribulose 5-phosphate to formate and 3,4-dihydroxy-2-butanone 4-phosphate and the conversion of GTP to 2,5-diamino-6-ribosylamino-4(3H)-pyrimidinone 5'-phosphate (DARP), formate and pyrophosphate. RIBA2 and RIBA3 together are not able to complement the loss of function of RIBA1. In Arabidopsis thaliana (Mouse-ear cress), this protein is Bifunctional riboflavin biosynthesis protein RIBA 1, chloroplastic (RIBA1).